A 446-amino-acid chain; its full sequence is MKAFEVNFDGLVGPTHNYSGLSYGNVASETNIRDVSNPKEAAKQGLRKMKALHDMGFKQGVLLPQERPDIATLRRLGFTGSDREVLLQAAHQAPVFLGAVASASCMWTANAATVSPSADTTDGRVHFTAANLNAKFHRSIEHPTTTRILQGIFNNDQYFAHHKALPPTSQFGDEGAANHTRFCKNYEDKGVELFVYGRVAFDENAPRPMKYPARQTLEACQAVARLHGLADSSVVYAQQNPAVIDQGVFHNDVIAVGNRNVLFYHEQAFLNTSQMLTELEGKLQGCLLKAVKVSDSEVSVADAVSSYLFNSQLLSLNDDDMMLVVPHECRDNPNVKAYLDDLVTRGGPIKRVEVFDLKQSMKNGGGPACLRLRVALTEAELAAVHPHVMMSDGLFDTLNAWVDKHYRDRISQQDLADPQLLTECRTALDELTQLLQLGSLYPFQLA.

Substrate contacts are provided by residues 19 to 28, asparagine 110, and 137 to 138; these read SGLSYGNVAS and HR. The active site involves glutamate 174. Arginine 214 serves as a coordination point for substrate. Histidine 250 is a catalytic residue. 2 residues coordinate substrate: aspartate 252 and asparagine 363. Residue cysteine 369 is the Nucleophile of the active site.

This sequence belongs to the succinylarginine dihydrolase family. As to quaternary structure, homodimer.

It catalyses the reaction N(2)-succinyl-L-arginine + 2 H2O + 2 H(+) = N(2)-succinyl-L-ornithine + 2 NH4(+) + CO2. The protein operates within amino-acid degradation; L-arginine degradation via AST pathway; L-glutamate and succinate from L-arginine: step 2/5. In terms of biological role, catalyzes the hydrolysis of N(2)-succinylarginine into N(2)-succinylornithine, ammonia and CO(2). The chain is N-succinylarginine dihydrolase from Hahella chejuensis (strain KCTC 2396).